Here is a 2004-residue protein sequence, read N- to C-terminus: MEKYFGEKQERFSFRKLSVGLVSATISSLFFMSVLASSSVDAQETAGVHYKYVADSELSSEEKKQLVYDIPTYVENDDETYYLVYKLNSQNQLAELPNTGSKNERQALVAGASLAAMGILIFAVSKKKVKNKTVLHLVLVAGIGNGVLVSVHALENHLLLNYNTDYELTSGEKLPLPKEISGYTYIGYIKEGKTTSESEVSNQKSSVATPTKQQKVDYNVTPNFVDHPSTVQAIQEQTPVSSTKPTEVQVVEKPFSTELINPRKEEKQSSDSQEQLAEHKNLETKKEEKISPKEKTGVNTLNPQDEVLSGQLNKPELLYREETMETKIDFQEEIQENPDLAEGTVRVKQEGKLGKKVEIVRIFSVNKEEVSREIVSTSTTAPSPRIVEKGTKKTQVIKEQPETGVEHKDVQSGAIVEPAIQPELPEAVVSDKGEPEVQPTLPEAVVTDKGETEVQPESPDTVVSDKGEPEQVAPLPEYKGNIEQVKPETPVEKTKEQGPEKTEEVPVKPTEETPVNPNEGTTEGTSIQEAENPVQPAEESTTNSEKVSPDTSSKNTGEVSSNPSDSTTSVGESNKPEHNDSKNENSEKTVEEVPVNPNEGTVEGTSNQETEKPVQPAEETQTNSGKIANENTGEVSNKPSDSKPPVEESNQPEKNGTATKPENSGNTTSENGQTEPEPSNGNSTEDVSTESNTSNSNGNEEIKQENELDPDKKVEEPEKTLELRNVSDLELYSLSNGTYKQHISLEQVPSNPNSYFVKVKSSSFKDVYLPVASISEERKNDKILYKITAKVEKLQQEIESRYKDNFTFYLAKKGTEETTNFTSFSNLVKAINQNPSGTYHLAASLNANEVELGPDERSYIKDTFTGRLIGEKDGKNYAIYNLKKPLFENLSGATVEKLSLKNVAISGKDDIGSLANEAQNNTKIKQVHVDGVLAGERGIGGLLAKAEQSSITESSFKGRIINTYETTAAYNIGGMVGHLTGDKALLTKSKATVAISSNTNTSDQTVGGLAGLVDRDAQIQDSYAEGDINNVKHFGRVAGVAGNLWDRTSGDVRHAGSLTNVLSDVNVTNGNAITGYHYNEMKVKDTFSSKANRVYNVTLVKDEVVSKESFEERGTMLDASQIASKKAEINPLILPTVEPLSTSGKKDSDFSKVAYYQAKRNLTYKNIEKLLPFYNKATIVKYGNLVNENSLLYQKELLSAVMMKDNQVITDIVSNKQTANKLLLHYKDDLSEKLDLKYQNDFAKLAEYSLGNTGLLYTPNQFLYDQTSIIKQVLPDLQKVDYHSEAIRKTLGISPNVKQTELYLEDQFAKTKQQLEDSLKKLLSADAGLASANPVTEGYLVDKIKRNKEALLLGLTYLERWYNFSYGQVNVKDLVLYHLDFFGKGNASPLDTLIELGKSGFNNLLAKNNVDTYGISLASQHGTTDLFSTLEHYRKVFLPNTSNNDWFKSETKAYIVEEKSTIEEVKTKQGLAGTKYSIGVYDRITSATWKYRNMVLPLLTLPERSVFVISTMSSLGFGAYDRYRSSDHKAGKALNDFVEENARETAKRQRDHYDYWYRILDDNAREKLYRNILLYDAYKFGDDNTVGKATEVADFDNPNPAMQHFFGPVGNKVGHNQHGAYATGDAVYYMGYRMLDKDGAITYTHEMTHDSDQDIYLGGYGRRSGLGPEFFAKGLLQAPDHPDDATITINSILKHSKSDSTESRRLQVLDPTTRFNNADDLKQYVHNMFDVVYMLEYLEGNSILKLDTNQKQQLLRKVTNEYHPDPDGNKVYATNVVRNLTVEEVERLRSFNDLIDNNILSSREYASGKYERNGYFTIKLFAPIYAALSNDIGTPGDLMGRRIAYELLAAKGFKDGMVPYISNQYEEEAKQKGKTINLYGKTRGLVTDDLVLEKVFNNQYHTWSEFKKAMYQERQDQFDRLNKVTFNDTTQPWQTFAKKTTSSVDELQKLMDVAVRKDAEHNYYHWNNYNPDIDSEVHKLKRAIFKAYLDQTNDFRSSIFENKK.

The first 42 residues, 1–42 (MEKYFGEKQERFSFRKLSVGLVSATISSLFFMSVLASSSVDA), serve as a signal peptide directing secretion. Positions 43-99 (QETAGVHYKYVADSELSSEEKKQLVYDIPTYVENDDETYYLVYKLNSQNQLAELPNT) are excised as a propeptide. The short motif at 96–100 (LPNTG) is the LPXTG sorting signal element. T99 carries the post-translational modification Pentaglycyl murein peptidoglycan amidated threonine. The next 2 helical transmembrane spans lie at 106 to 125 (QALV…FAVS) and 132 to 154 (KTVL…VHAL). The Extracellular portion of the chain corresponds to 155–2004 (ENHLLLNYNT…FRSSIFENKK (1850 aa)). Disordered regions lie at residues 194–213 (TTSE…PTKQ), 235–305 (QEQT…NPQD), 373–394 (EIVS…TKKT), and 422–720 (PELP…PEKT). Composition is skewed to polar residues over residues 197–213 (ESEV…PTKQ) and 235–246 (QEQTPVSSTKPT). Basic and acidic residues predominate over residues 276–296 (LAEHKNLETKKEEKISPKEKT). The 80-residue stretch at 314–393 (KPELLYREET…PRIVEKGTKK (80 aa)) folds into the G5 domain. Tandem repeats lie at residues 419 to 435 (AIQP…KGEP), 436 to 452 (EVQP…KGET), and 453 to 469 (EVQP…KGEP). The tract at residues 419–469 (AIQPELPEAVVSDKGEPEVQPTLPEAVVTDKGETEVQPESPDTVVSDKGEP) is 3 X 17 AA approximate tandem repeats. Residues 485-511 (VKPETPVEKTKEQGPEKTEEVPVKPTE) are compositionally biased toward basic and acidic residues. Composition is skewed to polar residues over residues 516–529 (NPNE…SIQE) and 538–572 (EEST…SVGE). The segment covering 574–591 (NKPEHNDSKNENSEKTVE) has biased composition (basic and acidic residues). Polar residues-rich tracts occupy residues 618–639 (EETQ…SNKP) and 648–681 (ESNQ…PSNG). Over residues 682–699 (NSTEDVSTESNTSNSNGN) the composition is skewed to low complexity. Residues 700–720 (EEIKQENELDPDKKVEEPEKT) are compositionally biased toward basic and acidic residues. H1645 lines the Zn(2+) pocket. E1646 is an active-site residue. 2 residues coordinate Zn(2+): H1649 and E1669.

It belongs to the peptidase M26 family. Zn(2+) is required as a cofactor. In terms of processing, the Gram-positive cell-wall anchor motif LPXTG is located in the N-terminal part, in contrast to such motifs in other known streptococcal and staphylococcal proteins. The protease could be cleaved by the sortase and anchored in the membrane via the two potential N-terminal transmembrane domains, whereas the propeptide located prior to the LPXTG motif would remain attached to the cell wall peptidoglycan by an amide bond.

It localises to the secreted. Its subcellular location is the cell wall. It is found in the membrane. The catalysed reaction is Cleavage of Pro-|-Thr bond in the hinge region of the heavy chain of human IgA.. Its function is as follows. Zinc metalloproteinase which cleaves human immunoglobulin A1 (IgA1) in the hinge region, rendering it less efficient in coating the surface of colonizing or invading pneumococci. Strongly contributes to virulence in mice. May be responsible for pneumococcal infection and is potentially involved in distinct stages of pneumococcal disease. This is Immunoglobulin A1 protease (iga) from Streptococcus pneumoniae serotype 4 (strain ATCC BAA-334 / TIGR4).